We begin with the raw amino-acid sequence, 406 residues long: Arginine biosynthesis bifunctional protein ArgJ (406 aa).

Residues threonine 152, lysine 179, threonine 190, glutamate 277, asparagine 401, and serine 406 each coordinate substrate. Threonine 190 acts as the Nucleophile in catalysis.

Belongs to the ArgJ family. Heterotetramer of two alpha and two beta chains.

The protein resides in the cytoplasm. It carries out the reaction N(2)-acetyl-L-ornithine + L-glutamate = N-acetyl-L-glutamate + L-ornithine. The enzyme catalyses L-glutamate + acetyl-CoA = N-acetyl-L-glutamate + CoA + H(+). Its pathway is amino-acid biosynthesis; L-arginine biosynthesis; L-ornithine and N-acetyl-L-glutamate from L-glutamate and N(2)-acetyl-L-ornithine (cyclic): step 1/1. It functions in the pathway amino-acid biosynthesis; L-arginine biosynthesis; N(2)-acetyl-L-ornithine from L-glutamate: step 1/4. Functionally, catalyzes two activities which are involved in the cyclic version of arginine biosynthesis: the synthesis of N-acetylglutamate from glutamate and acetyl-CoA as the acetyl donor, and of ornithine by transacetylation between N(2)-acetylornithine and glutamate. The polypeptide is Arginine biosynthesis bifunctional protein ArgJ (Neisseria meningitidis serogroup A / serotype 4A (strain DSM 15465 / Z2491)).